We begin with the raw amino-acid sequence, 247 residues long: 3-deoxy-manno-octulosonate cytidylyltransferase (247 aa).

This sequence belongs to the KdsB family.

The protein localises to the cytoplasm. It catalyses the reaction 3-deoxy-alpha-D-manno-oct-2-ulosonate + CTP = CMP-3-deoxy-beta-D-manno-octulosonate + diphosphate. It functions in the pathway nucleotide-sugar biosynthesis; CMP-3-deoxy-D-manno-octulosonate biosynthesis; CMP-3-deoxy-D-manno-octulosonate from 3-deoxy-D-manno-octulosonate and CTP: step 1/1. It participates in bacterial outer membrane biogenesis; lipopolysaccharide biosynthesis. Activates KDO (a required 8-carbon sugar) for incorporation into bacterial lipopolysaccharide in Gram-negative bacteria. This Pelodictyon phaeoclathratiforme (strain DSM 5477 / BU-1) protein is 3-deoxy-manno-octulosonate cytidylyltransferase.